The sequence spans 442 residues: Signal recognition particle 54 kDa protein (442 aa).

Residues 106 to 113, 186 to 190, and 244 to 247 contribute to the GTP site; these read GLQGSGKT, DTAGR, and TKLD.

This sequence belongs to the GTP-binding SRP family. SRP54 subfamily. Part of the signal recognition particle protein translocation system, which is composed of SRP and FtsY. Archaeal SRP consists of a 7S RNA molecule of 300 nucleotides and two protein subunits: SRP54 and SRP19.

The protein resides in the cytoplasm. It carries out the reaction GTP + H2O = GDP + phosphate + H(+). Functionally, involved in targeting and insertion of nascent membrane proteins into the cytoplasmic membrane. Binds to the hydrophobic signal sequence of the ribosome-nascent chain (RNC) as it emerges from the ribosomes. The SRP-RNC complex is then targeted to the cytoplasmic membrane where it interacts with the SRP receptor FtsY. This Methanothermobacter thermautotrophicus (strain ATCC 29096 / DSM 1053 / JCM 10044 / NBRC 100330 / Delta H) (Methanobacterium thermoautotrophicum) protein is Signal recognition particle 54 kDa protein.